We begin with the raw amino-acid sequence, 293 residues long: Protease HtpX (293 aa).

The next 2 helical transmembrane spans lie at 2 to 22 and 38 to 58; these read FRILLFLATNIAVVLVASVTL and LTSLLIFCAVFGMSGAMISLF. Residue His-145 coordinates Zn(2+). The active site involves Glu-146. His-149 provides a ligand contact to Zn(2+). Transmembrane regions (helical) follow at residues 156–176 and 193–213; these read VTLALIQGVINTFVMFFARII and IGFFITTIFAEIVLGILASII. Residue Glu-222 participates in Zn(2+) binding.

This sequence belongs to the peptidase M48B family. Zn(2+) is required as a cofactor.

Its subcellular location is the cell inner membrane. This is Protease HtpX from Hahella chejuensis (strain KCTC 2396).